The chain runs to 717 residues: Translation initiation factor eIF2B subunit epsilon (717 aa).

A compositionally biased stretch (low complexity) spans 1–14; that stretch reads MAATAAVPGAAAGR. The interval 1 to 37 is disordered; it reads MAATAAVPGAAAGRASKRGGGGSGGGGTQGAEEEPPP. The residue at position 18 (Arg18) is an Omega-N-methylarginine. A compositionally biased stretch (gly residues) spans 18 to 29; the sequence is RGGGGSGGGGTQ. Ser23 bears the Phosphoserine mark. Glycyl lysine isopeptide (Lys-Gly) (interchain with G-Cter in ubiquitin) cross-links involve residues Lys57 and Lys99. Phosphoserine is present on Ser126. Glycyl lysine isopeptide (Lys-Gly) (interchain with G-Cter in ubiquitin) cross-links involve residues Lys137 and Lys213. Residue Thr318 is modified to Phosphothreonine. A disordered region spans residues 442–479; sequence GSVISLHPPDAEEDEDDGQFSDDSGADQEKEKVKLKGY. Ser446, Ser462, and Ser465 each carry phosphoserine. The segment covering 452–467 has biased composition (acidic residues); sequence AEEDEDDGQFSDDSGA. A Glycyl lysine isopeptide (Lys-Gly) (interchain with G-Cter in ubiquitin) cross-link involves residue Lys501. Positions 517 to 538 are disordered; the sequence is TEEESETESEGSVDPEELDSRA. The segment covering 519–533 has biased composition (acidic residues); the sequence is EESETESEGSVDPEE. A phosphoserine mark is found at Ser528 and Ser536. A W2 domain is found at 539 to 716; it reads GSPQLDDIRV…REAEEESSED (178 aa). A Phosphoserine; by DYRK2 modification is found at Ser540. Residue Ser713 is modified to Phosphoserine.

The protein belongs to the eIF-2B gamma/epsilon subunits family. As to quaternary structure, component of the translation initiation factor 2B (eIF2B) complex which is a heterodecamer of two sets of five different subunits: alpha, beta, gamma, delta and epsilon. Subunits alpha, beta and delta comprise a regulatory subcomplex and subunits epsilon and gamma comprise a catalytic subcomplex. Within the complex, the hexameric regulatory complex resides at the center, with the two heterodimeric catalytic subcomplexes bound on opposite sides. In terms of processing, phosphorylated at Ser-540 by DYRK2; this is required for subsequent phosphorylation by GSK3B. Phosphorylated on serine and threonine residues by GSK3B; phosphorylation inhibits its function. Post-translationally, polyubiquitinated, probably by NEDD4.

The protein localises to the cytoplasm. It is found in the cytosol. Its activity is regulated as follows. Activated by the chemical integrated stress response (ISR) inhibitor ISRIB which stimulates guanine nucleotide exchange factor activity for both phosphorylated and unphosphorylated eIF2. Functionally, acts as a component of the translation initiation factor 2B (eIF2B) complex, which catalyzes the exchange of GDP for GTP on eukaryotic initiation factor 2 (eIF2) gamma subunit. Its guanine nucleotide exchange factor activity is repressed when bound to eIF2 complex phosphorylated on the alpha subunit, thereby limiting the amount of methionyl-initiator methionine tRNA available to the ribosome and consequently global translation is repressed. The polypeptide is Translation initiation factor eIF2B subunit epsilon (Eif2b5) (Mus musculus (Mouse)).